The sequence spans 275 residues: Probable aquaporin NIP7-1 (275 aa).

A compositionally biased stretch (basic and acidic residues) spans Met1–Asp11. The tract at residues Met1 to His26 is disordered. Helical transmembrane passes span Ile47–Ser67 and Val76–Ile96. The short motif at Asn105–Ser107 is the NPA 1 element. The next 3 helical transmembrane spans lie at Ile127–Val147, Val161–Leu181, and Leu192–Ser212. The NPA 2 motif lies at Asn217–Ala219. A helical transmembrane segment spans residues Phe231–Thr251. Phosphoserine is present on Ser272.

It belongs to the MIP/aquaporin (TC 1.A.8) family. NIP (TC 1.A.8.12) subfamily. In terms of tissue distribution, expressed in floral buds.

It localises to the membrane. Aquaporins facilitate the transport of water and small neutral solutes across cell membranes. The chain is Probable aquaporin NIP7-1 (NIP7-1) from Arabidopsis thaliana (Mouse-ear cress).